A 402-amino-acid chain; its full sequence is D-mannonate dehydratase (402 aa).

Residues asparagine 37 and histidine 122 each contribute to the substrate site. Residue tyrosine 159 is the Proton donor/acceptor of the active site. Aspartate 210 provides a ligand contact to Mg(2+). Histidine 212 acts as the Proton donor/acceptor in catalysis. Mg(2+) contacts are provided by glutamate 236 and glutamate 262. Substrate-binding residues include glutamate 262, arginine 283, histidine 312, aspartate 316, and glutamate 339.

The protein belongs to the mandelate racemase/muconate lactonizing enzyme family. GalD subfamily. The cofactor is Mg(2+).

It carries out the reaction D-mannonate = 2-dehydro-3-deoxy-D-gluconate + H2O. It participates in carbohydrate metabolism; pentose and glucuronate interconversion. Its function is as follows. Catalyzes the dehydration of D-mannonate. Has no detectable activity with a panel of 70 other acid sugars (in vitro). The sequence is that of D-mannonate dehydratase from Rhizorhabdus wittichii (strain DSM 6014 / CCUG 31198 / JCM 15750 / NBRC 105917 / EY 4224 / RW1) (Sphingomonas wittichii).